The sequence spans 407 residues: Lymphocyte transmembrane adapter 1 (407 aa).

Residues 1–25 form a disordered region; sequence MYSTPAPPEVTRRNSEPSTRQGTLG. The Extracellular segment spans residues 1-33; that stretch reads MYSTPAPPEVTRRNSEPSTRQGTLGSLQGEKGQ. The segment covering 16–25 has biased composition (polar residues); it reads EPSTRQGTLG. Residues 34-54 traverse the membrane as a helical; Signal-anchor for type III membrane protein segment; it reads IIFPGFVVLLTIILVIIAACI. At 55–407 the chain is on the cytoplasmic side; that stretch reads LWSWKKQKKR…LATETSDEDA (353 aa). The interval 109 to 131 is disordered; the sequence is ESLLSRASDSPEPEAPQANGSLQ. Phosphotyrosine is present on residues Y185, Y260, Y286, and Y353. Positions 331 to 388 are disordered; it reads SAQSEDSAMVHREEQSSEDSSDYETVLVAELEGRDWKQGPGTQHPSDEGTPGDLAGKL.

As to quaternary structure, when phosphorylated, interacts with GRB2, PIK3R1 and GRAP2. In terms of processing, phosphorylated on tyrosines upon TCR or BCR activation; which leads to the recruitment of GRB2, PIK3R1 and GRAP2. Expressed in T-cells and B-cells.

The protein resides in the cell membrane. In terms of biological role, negatively regulates TCR (T-cell antigen receptor)-mediated signaling in T-cells and BCR (B-cell antigen receptor)-mediated signaling in B-cells. The chain is Lymphocyte transmembrane adapter 1 (Lax1) from Mus musculus (Mouse).